Reading from the N-terminus, the 112-residue chain is Small ribosomal subunit protein bS6 (112 aa).

This sequence belongs to the bacterial ribosomal protein bS6 family.

Its function is as follows. Binds together with bS18 to 16S ribosomal RNA. The polypeptide is Small ribosomal subunit protein bS6 (Legionella pneumophila (strain Paris)).